A 76-amino-acid chain; its full sequence is Putative snRNP Sm-like protein (76 aa).

In terms of domain architecture, Sm spans 4 to 76 (RPLDVIHRSL…VLAISPVDIE (73 aa)).

The protein belongs to the snRNP Sm proteins family.

The chain is Putative snRNP Sm-like protein from Thermococcus gammatolerans (strain DSM 15229 / JCM 11827 / EJ3).